A 254-amino-acid chain; its full sequence is DNA repair protein RecO (254 aa).

The protein belongs to the RecO family.

Functionally, involved in DNA repair and RecF pathway recombination. The sequence is that of DNA repair protein RecO from Verminephrobacter eiseniae (strain EF01-2).